The chain runs to 1433 residues: DNA-directed RNA polymerase subunit beta' (1433 aa).

Zn(2+) is bound by residues Cys-66, Cys-68, Cys-81, and Cys-84. Mg(2+) is bound by residues Asp-473, Asp-475, and Asp-477. Cys-815, Cys-889, Cys-896, and Cys-899 together coordinate Zn(2+).

This sequence belongs to the RNA polymerase beta' chain family. As to quaternary structure, the RNAP catalytic core consists of 2 alpha, 1 beta, 1 beta' and 1 omega subunit. When a sigma factor is associated with the core the holoenzyme is formed, which can initiate transcription. Mg(2+) is required as a cofactor. Zn(2+) serves as cofactor.

It carries out the reaction RNA(n) + a ribonucleoside 5'-triphosphate = RNA(n+1) + diphosphate. Its function is as follows. DNA-dependent RNA polymerase catalyzes the transcription of DNA into RNA using the four ribonucleoside triphosphates as substrates. The polypeptide is DNA-directed RNA polymerase subunit beta' (Porphyromonas gingivalis (strain ATCC 33277 / DSM 20709 / CIP 103683 / JCM 12257 / NCTC 11834 / 2561)).